Reading from the N-terminus, the 151-residue chain is 3-dehydroquinate dehydratase (151 aa).

Tyrosine 26 functions as the Proton acceptor in the catalytic mechanism. Asparagine 75, histidine 81, and aspartate 88 together coordinate substrate. Histidine 101 serves as the catalytic Proton donor. Substrate-binding positions include 102–103 and arginine 112; that span reads LS.

It belongs to the type-II 3-dehydroquinase family. Homododecamer.

The catalysed reaction is 3-dehydroquinate = 3-dehydroshikimate + H2O. The protein operates within metabolic intermediate biosynthesis; chorismate biosynthesis; chorismate from D-erythrose 4-phosphate and phosphoenolpyruvate: step 3/7. In terms of biological role, catalyzes a trans-dehydration via an enolate intermediate. The chain is 3-dehydroquinate dehydratase from Shewanella halifaxensis (strain HAW-EB4).